The following is a 376-amino-acid chain: UDP-N-acetylglucosamine 2-epimerase (376 aa).

Substrate contacts are provided by residues arginine 10, lysine 15, aspartate 95, glutamate 117, histidine 213, glutamine 271, phenylalanine 276, 290-292 (SGG), glutamate 296, and arginine 313.

Belongs to the UDP-N-acetylglucosamine 2-epimerase family. Homodimer.

Its subcellular location is the cytoplasm. The enzyme catalyses UDP-N-acetyl-alpha-D-glucosamine = UDP-N-acetyl-alpha-D-mannosamine. Its pathway is bacterial outer membrane biogenesis; enterobacterial common antigen biosynthesis. Allosterically activated by its substrate, UDP-GlcNAc. Functionally, catalyzes the reversible epimerization at C-2 of UDP-N-acetylglucosamine (UDP-GlcNAc) and thereby provides bacteria with UDP-N-acetylmannosamine (UDP-ManNAc), the activated donor of ManNAc residues. Also involved in bacteriophage N4 adsorption. The protein is UDP-N-acetylglucosamine 2-epimerase of Escherichia coli (strain K12).